The chain runs to 130 residues: Small ribosomal subunit protein uS9 (130 aa).

The protein belongs to the universal ribosomal protein uS9 family.

This chain is Small ribosomal subunit protein uS9, found in Vibrio vulnificus (strain CMCP6).